The primary structure comprises 80 residues: Exodeoxyribonuclease 7 small subunit (80 aa).

This sequence belongs to the XseB family. In terms of assembly, heterooligomer composed of large and small subunits.

It localises to the cytoplasm. The enzyme catalyses Exonucleolytic cleavage in either 5'- to 3'- or 3'- to 5'-direction to yield nucleoside 5'-phosphates.. In terms of biological role, bidirectionally degrades single-stranded DNA into large acid-insoluble oligonucleotides, which are then degraded further into small acid-soluble oligonucleotides. This Edwardsiella ictaluri (strain 93-146) protein is Exodeoxyribonuclease 7 small subunit.